Consider the following 28-residue polypeptide: M-ectatotoxin-Eb2c (28 aa).

Expressed by the venom gland.

Its subcellular location is the secreted. Its function is as follows. Antimicrobial peptide active against Gram-negative bacterium E.coli MH1 (MIC=3.5 uM) and P.aeruginosa PAO1 (MIC=10 uM) and against Gram-positive bacterium A.globiformis VKM Ac-1112 (MIC=1.25 uM). The polypeptide is M-ectatotoxin-Eb2c (Ectatomma brunneum (Ant)).